A 305-amino-acid chain; its full sequence is Putative beta-lactamase HcpD (305 aa).

The first 27 residues, 1–27 (MIKSWTKKWFLILFLMASCFGHLVATT), serve as a signal peptide directing secretion. TPR repeat units follow at residues 28–61 (GEKY…RMGV), 96–133 (HLAC…KGGV), 168–205 (GISC…KDGA), and 240–277 (GSGC…GFSG). Disulfide bonds link C55–C63, C91–C99, C127–C135, C163–C171, C199–C207, C235–C243, and C271–C279.

The protein belongs to the hcp beta-lactamase family.

It localises to the secreted. The catalysed reaction is a beta-lactam + H2O = a substituted beta-amino acid. In terms of biological role, may hydrolyze 6-aminopenicillinic acid and 7-aminocephalosporanic acid (ACA) derivatives. Binds to penicillin. This Helicobacter pylori (strain J99 / ATCC 700824) (Campylobacter pylori J99) protein is Putative beta-lactamase HcpD (hcpD).